The following is a 257-amino-acid chain: DNA repair protein RecO (257 aa).

This sequence belongs to the RecO family.

Functionally, involved in DNA repair and RecF pathway recombination. The protein is DNA repair protein RecO of Streptococcus thermophilus (strain CNRZ 1066).